We begin with the raw amino-acid sequence, 938 residues long: AP-2 complex subunit alpha-2 (938 aa).

A 1,2-diacyl-sn-glycero-3-phospho-(1D-myo-inositol-3,4,5-trisphosphate) is bound by residues 11–12, lysine 43, tyrosine 53, and 57–61; these read RG and KYVCK. Residues 615–681 form a disordered region; the sequence is LKKKKGPSTV…TGPPPSSGGG (67 aa). Residues 646–667 are compositionally biased toward low complexity; the sequence is PASTSAASTPSPSADLLGLGAV. Residues 668-677 are compositionally biased toward pro residues; the sequence is PPAPTGPPPS.

Belongs to the adaptor complexes large subunit family. In terms of assembly, adaptor protein complex 2 (AP-2) is a heterotetramer composed of two large adaptins (alpha-type subunit AP2A1 or AP2A2 and beta-type subunit AP2B1), a medium adaptin (mu-type subunit AP2M1) and a small adaptin (sigma-type subunit AP2S1). Interacts with clathrin. Binds EPN1, EPS15, AMPH, SNAP91 and BIN1. Interacts with HIP1. Interacts with DGKD. Interacts with DENND1A, DENND1B and DENND1C. Interacts with FCHO1 and DAB2. Interacts with ATAT1; this interaction is required for efficient alpha-tubulin acetylation by ATAT1. Interacts with KIAA1107. Together with AP2B1 and AP2M1, it interacts with ADAM10; this interaction facilitates ADAM10 endocytosis from the plasma membrane during long-term potentiation in hippocampal neurons. Interacts with CLN3 (via dileucine motif). Interacts with ABCB11; this interaction regulates cell membrane expression of ABCB11 through its internalization in a clathrin-dependent manner and its subsequent degradation. Interacts with Cacfd1. Interacts with DNAJC6. As to expression, widely expressed.

The protein localises to the cell membrane. The protein resides in the membrane. It localises to the coated pit. In terms of biological role, component of the adaptor protein complex 2 (AP-2). Adaptor protein complexes function in protein transport via transport vesicles in different membrane traffic pathways. Adaptor protein complexes are vesicle coat components and appear to be involved in cargo selection and vesicle formation. AP-2 is involved in clathrin-dependent endocytosis in which cargo proteins are incorporated into vesicles surrounded by clathrin (clathrin-coated vesicles, CCVs) which are destined for fusion with the early endosome. The clathrin lattice serves as a mechanical scaffold but is itself unable to bind directly to membrane components. Clathrin-associated adaptor protein (AP) complexes which can bind directly to both the clathrin lattice and to the lipid and protein components of membranes are considered to be the major clathrin adaptors contributing the CCV formation. AP-2 also serves as a cargo receptor to selectively sort the membrane proteins involved in receptor-mediated endocytosis. AP-2 seems to play a role in the recycling of synaptic vesicle membranes from the presynaptic surface. AP-2 recognizes Y-X-X-[FILMV] (Y-X-X-Phi) and [ED]-X-X-X-L-[LI] endocytosis signal motifs within the cytosolic tails of transmembrane cargo molecules. AP-2 may also play a role in maintaining normal post-endocytic trafficking through the ARF6-regulated, non-clathrin pathway. During long-term potentiation in hippocampal neurons, AP-2 is responsible for the endocytosis of ADAM10. The AP-2 alpha subunit binds polyphosphoinositide-containing lipids, positioning AP-2 on the membrane. The AP-2 alpha subunit acts via its C-terminal appendage domain as a scaffolding platform for endocytic accessory proteins. The AP-2 alpha and AP-2 sigma subunits are thought to contribute to the recognition of the [ED]-X-X-X-L-[LI] motif. This is AP-2 complex subunit alpha-2 from Rattus norvegicus (Rat).